Here is a 542-residue protein sequence, read N- to C-terminus: Peptide chain release factor 3 (542 aa).

In terms of domain architecture, tr-type G spans 14 to 283 (ELRRNFAIIS…YFLEYALKPG (270 aa)). GTP contacts are provided by residues 23 to 30 (SHPDAGKT), 91 to 95 (DTPGH), and 145 to 148 (NKLD).

It belongs to the TRAFAC class translation factor GTPase superfamily. Classic translation factor GTPase family. PrfC subfamily.

The protein localises to the cytoplasm. In terms of biological role, increases the formation of ribosomal termination complexes and stimulates activities of RF-1 and RF-2. It binds guanine nucleotides and has strong preference for UGA stop codons. It may interact directly with the ribosome. The stimulation of RF-1 and RF-2 is significantly reduced by GTP and GDP, but not by GMP. In Nostoc punctiforme (strain ATCC 29133 / PCC 73102), this protein is Peptide chain release factor 3.